The primary structure comprises 54 residues: Light-harvesting protein B-800/850 alpha chain (54 aa).

Residues methionine 1–valine 14 are Cytoplasmic-facing. Residues glycine 15–leucine 35 traverse the membrane as a helical segment. Histidine 31 provides a ligand contact to a bacteriochlorophyll. Residues threonine 36 to glutamate 54 lie on the Periplasmic side of the membrane.

This sequence belongs to the antenna complex alpha subunit family. In terms of assembly, the core complex is formed by different alpha and beta chains, binding bacteriochlorophyll molecules, and arranged most probably in tetrameric structures disposed around the reaction center. The non-pigmented gamma chains may constitute additional components.

The protein resides in the cell inner membrane. Its function is as follows. Antenna complexes are light-harvesting systems, which transfer the excitation energy to the reaction centers. This chain is Light-harvesting protein B-800/850 alpha chain (pucA), found in Cereibacter sphaeroides (Rhodobacter sphaeroides).